A 590-amino-acid polypeptide reads, in one-letter code: Plasmepsin V (590 aa).

The Lumenal portion of the chain corresponds to 1 to 544 (MNNYFLRKEN…EKENIFLKVS (544 aa)). The stretch at 33-81 (CNNVENKIDNVGKKIENVGKKIGDMENKNDNVENKNDNVGNKNDNVKNA) forms a coiled coil. The Peptidase A1 domain maps to 100–514 (YFLDIDIGKP…DLQQNQIAFI (415 aa)). Asp118 is an active-site residue. 7 cysteine pairs are disulfide-bonded: Cys128–Cys211, Cys131–Cys134, Cys155–Cys166, Cys160–Cys171, Cys259–Cys518, Cys389–Cys434, and Cys443–Cys479. A compositionally biased stretch (basic and acidic residues) spans 282-291 (KEKQKMDKSD). The tract at residues 282 to 316 (KEKQKMDKSDNNSSNKGNVSIKLKNNDKNDDEENN) is disordered. The span at 292-304 (NNSSNKGNVSIKL) shows a compositional bias: low complexity. Asp365 is an active-site residue. A helical transmembrane segment spans residues 545 to 565 (YINLYCLWLLLALTILLSLIL). Residues 566 to 590 (YVRKMFYMDYFPLSDQNKSPIQEST) lie on the Cytoplasmic side of the membrane.

The protein belongs to the peptidase A1 family. As to quaternary structure, component of a complex composed of SPC25 and PMV; the interaction is mediated via the transmembrane domains. The complex interacts with the SEC61 channel-forming translocon complex and is involved in the recognition and import of PEXEL motif-containing proteins into the ER for subsequent export. Post-translationally, it is not clear if the zymogen has a cleavable propeptide. In vitro, appears to be cleaved between Asn-80 and Ala-81. Cleavage of the putative propeptide is dispensable for catalytic activity.

The protein localises to the endoplasmic reticulum membrane. With respect to regulation, inhibited by peptidomimetic inhibitor WEHI-842. Inhibited by Cu(2+) and Hg(2+). During the asexual blood stage, plays an essential role in the export of several proteins into the host erythrocytes by cleaving the pentameric localization motif RxLxE/Q/D (termed Plasmodium export element (PEXEL)) located downstream of the N-terminal secretory signal sequence. Specifically, cleaves after the leucine residue in the RxLxE/Q/D (or RxLxxE) motif of exported proteins including RESA, EMP2, EMP3, KAHRP, RIF/Rifin and STEVOR. Also, by regulating protein export, plays an essential role in gametocyte development and thus, parasite transmission to the mosquito vector. The polypeptide is Plasmepsin V (Plasmodium falciparum (isolate 3D7)).